The following is a 162-amino-acid chain: Nucleotide-binding protein SAV_4896 (162 aa).

The protein belongs to the YajQ family.

Its function is as follows. Nucleotide-binding protein. This is Nucleotide-binding protein SAV_4896 from Streptomyces avermitilis (strain ATCC 31267 / DSM 46492 / JCM 5070 / NBRC 14893 / NCIMB 12804 / NRRL 8165 / MA-4680).